Here is a 178-residue protein sequence, read N- to C-terminus: Caveolin-1 (178 aa).

Position 2 is an N-acetylserine (Ser-2). Ser-2 carries the phosphoserine modification. The required for homooligomerization stretch occupies residues Ser-2–Val-94. The Cytoplasmic portion of the chain corresponds to Ser-2–Ser-104. Lys-5 carries the post-translational modification N6-acetyllysine; alternate. Residue Lys-5 forms a Glycyl lysine isopeptide (Lys-Gly) (interchain with G-Cter in ubiquitin); alternate linkage. Position 6 is a phosphotyrosine (Tyr-6). Ser-9 is modified (phosphoserine). Tyr-14 carries the post-translational modification Phosphotyrosine; by ABL1. Tyr-25 carries the post-translational modification Phosphotyrosine. Glycyl lysine isopeptide (Lys-Gly) (interchain with G-Cter in ubiquitin) cross-links involve residues Lys-26 and Lys-30. At Ser-37 the chain carries Phosphoserine. Residues Lys-39, Lys-47, and Lys-57 each participate in a glycyl lysine isopeptide (Lys-Gly) (interchain with G-Cter in ubiquitin) cross-link. Residues Asp-82–Val-94 form an interaction with CAVIN3 region. The helical intramembrane region spans Ala-105–Leu-125. Residues His-126–Ile-178 lie on the Cytoplasmic side of the membrane. The tract at residues Val-131–Gln-142 is interacts with SPRY1, SPRY2, SPRY3 and SPRY4. S-palmitoyl cysteine attachment occurs at residues Cys-133, Cys-143, and Cys-156. The tract at residues Ser-149–Phe-160 is interacts with SPRY1, SPRY2, and SPRY4. Positions Phe-167–Ile-178 are interacts with SPRY1, SPRY2, SPRY3 and SPRY4.

Belongs to the caveolin family. In terms of assembly, homooligomer. Interacts with GLIPR2. Interacts with NOSTRIN. Interacts with SNAP25 and STX1A. Interacts (via the N-terminus) with DPP4; the interaction is direct. Interacts with CTNNB1, CDH1 and JUP. Interacts with PACSIN2; this interaction induces membrane tubulation. Interacts with SLC7A9. Interacts with BMX and BTK. Interacts with TGFBR1. Interacts with CAVIN3 (via leucine-zipper domain) in a cholesterol-sensitive manner. Interacts with CAVIN1. Interacts with EHD2 in a cholesterol-dependent manner. Forms a ternary complex with UBXN6 and VCP; mediates CAV1 targeting to lysosomes for degradation. Interacts with ABCG1; this interaction regulates ABCG1-mediated cholesterol efflux. Interacts with NEU3; this interaction enhances NEU3 sialidase activity within caveola. Interacts (via C-terminus) with SPRY1, SPRY2 (via C-terminus), SPRY3, and SPRY4. Interacts with IGFBP5; this interaction allows trafficking of IGFBP5 from the plasma membrane to the nucleus. Phosphorylated at Tyr-14 by ABL1 in response to oxidative stress. In terms of processing, ubiquitinated. Undergo monoubiquitination and multi- and/or polyubiquitination. Monoubiquitination of N-terminal lysines promotes integration in a ternary complex with UBXN6 and VCP which promotes oligomeric CAV1 targeting to lysosomes for degradation. Ubiquitinated by ZNRF1; leading to degradation and modulation of the TLR4-mediated immune response.

It is found in the golgi apparatus membrane. The protein localises to the cell membrane. Its subcellular location is the membrane. It localises to the caveola. The protein resides in the membrane raft. Its function is as follows. May act as a scaffolding protein within caveolar membranes. Forms a stable heterooligomeric complex with CAV2 that targets to lipid rafts and drives caveolae formation. Mediates the recruitment of CAVIN proteins (CAVIN1/2/3/4) to the caveolae. Interacts directly with G-protein alpha subunits and can functionally regulate their activity. Involved in the costimulatory signal essential for T-cell receptor (TCR)-mediated T-cell activation. Its binding to DPP4 induces T-cell proliferation and NF-kappa-B activation in a T-cell receptor/CD3-dependent manner. Recruits CTNNB1 to caveolar membranes and may regulate CTNNB1-mediated signaling through the Wnt pathway. Negatively regulates TGFB1-mediated activation of SMAD2/3 by mediating the internalization of TGFBR1 from membrane rafts leading to its subsequent degradation. Binds 20(S)-hydroxycholesterol (20(S)-OHC). This Aotus nancymaae (Ma's night monkey) protein is Caveolin-1 (CAV1).